A 339-amino-acid polypeptide reads, in one-letter code: Dihydroorotase (339 aa).

Residues His12 and His14 each contribute to the Zn(2+) site. Residues 14-16 and Asn40 each bind substrate; that span reads HVR. Zn(2+) contacts are provided by Lys94, His133, His167, and Asp239. Lys94 is modified (N6-carboxylysine). Substrate is bound at residue His133. Asp239 is a catalytic residue. The substrate site is built by His243 and Ala255.

Belongs to the metallo-dependent hydrolases superfamily. DHOase family. Class II DHOase subfamily. In terms of assembly, homodimer. Zn(2+) is required as a cofactor.

It catalyses the reaction (S)-dihydroorotate + H2O = N-carbamoyl-L-aspartate + H(+). It participates in pyrimidine metabolism; UMP biosynthesis via de novo pathway; (S)-dihydroorotate from bicarbonate: step 3/3. Catalyzes the reversible cyclization of carbamoyl aspartate to dihydroorotate. The sequence is that of Dihydroorotase from Helicobacter pylori (strain J99 / ATCC 700824) (Campylobacter pylori J99).